We begin with the raw amino-acid sequence, 877 residues long: Leucine--tRNA ligase (877 aa).

The short motif at 43–53 (PYPSGRIHMGH) is the 'HIGH' region element. The short motif at 628–632 (KMSKS) is the 'KMSKS' region element. K631 lines the ATP pocket.

Belongs to the class-I aminoacyl-tRNA synthetase family.

It is found in the cytoplasm. The catalysed reaction is tRNA(Leu) + L-leucine + ATP = L-leucyl-tRNA(Leu) + AMP + diphosphate. The chain is Leucine--tRNA ligase from Brucella canis (strain ATCC 23365 / NCTC 10854 / RM-666).